A 110-amino-acid chain; its full sequence is Phosphoribosyl-ATP pyrophosphatase (110 aa).

It belongs to the PRA-PH family.

The protein localises to the cytoplasm. It carries out the reaction 1-(5-phospho-beta-D-ribosyl)-ATP + H2O = 1-(5-phospho-beta-D-ribosyl)-5'-AMP + diphosphate + H(+). It participates in amino-acid biosynthesis; L-histidine biosynthesis; L-histidine from 5-phospho-alpha-D-ribose 1-diphosphate: step 2/9. The sequence is that of Phosphoribosyl-ATP pyrophosphatase from Lacticaseibacillus casei (strain BL23) (Lactobacillus casei).